We begin with the raw amino-acid sequence, 85 residues long: Putative membrane protein insertion efficiency factor (85 aa).

The protein belongs to the UPF0161 family.

The protein resides in the cell inner membrane. Its function is as follows. Could be involved in insertion of integral membrane proteins into the membrane. The chain is Putative membrane protein insertion efficiency factor from Fervidobacterium nodosum (strain ATCC 35602 / DSM 5306 / Rt17-B1).